We begin with the raw amino-acid sequence, 702 residues long: Elongation factor G (702 aa).

In terms of domain architecture, tr-type G spans 8–290; the sequence is ERYRNIGISA…GVVEYLPSPV (283 aa). GTP is bound by residues 17 to 24, 88 to 92, and 142 to 145; these read AHIDAGKT, DTPGH, and NKMD.

The protein belongs to the TRAFAC class translation factor GTPase superfamily. Classic translation factor GTPase family. EF-G/EF-2 subfamily.

It localises to the cytoplasm. In terms of biological role, catalyzes the GTP-dependent ribosomal translocation step during translation elongation. During this step, the ribosome changes from the pre-translocational (PRE) to the post-translocational (POST) state as the newly formed A-site-bound peptidyl-tRNA and P-site-bound deacylated tRNA move to the P and E sites, respectively. Catalyzes the coordinated movement of the two tRNA molecules, the mRNA and conformational changes in the ribosome. The sequence is that of Elongation factor G from Janthinobacterium sp. (strain Marseille) (Minibacterium massiliensis).